A 516-amino-acid polypeptide reads, in one-letter code: Cytochrome P450 1A2 (516 aa).

Serine 69 carries an O-linked (GlcNAc) serine glycan. Residues phenylalanine 226 and 361–365 (DRPQL) contribute to the substrate site. Cysteine 458 is a heme binding site.

This sequence belongs to the cytochrome P450 family. Interacts with PGRMC1; the interaction requires PGRMC1 homodimerization. Heme is required as a cofactor.

It is found in the endoplasmic reticulum membrane. The protein resides in the microsome membrane. It carries out the reaction an organic molecule + reduced [NADPH--hemoprotein reductase] + O2 = an alcohol + oxidized [NADPH--hemoprotein reductase] + H2O + H(+). It catalyses the reaction 17beta-estradiol + reduced [NADPH--hemoprotein reductase] + O2 = 2-hydroxy-17beta-estradiol + oxidized [NADPH--hemoprotein reductase] + H2O + H(+). The enzyme catalyses 17beta-estradiol + reduced [NADPH--hemoprotein reductase] + O2 = 4-hydroxy-17beta-estradiol + oxidized [NADPH--hemoprotein reductase] + H2O + H(+). The catalysed reaction is estrone + reduced [NADPH--hemoprotein reductase] + O2 = 2-hydroxyestrone + oxidized [NADPH--hemoprotein reductase] + H2O + H(+). It carries out the reaction estrone + reduced [NADPH--hemoprotein reductase] + O2 = 4-hydroxyestrone + oxidized [NADPH--hemoprotein reductase] + H2O + H(+). It catalyses the reaction cholesterol + reduced [NADPH--hemoprotein reductase] + O2 = 25-hydroxycholesterol + oxidized [NADPH--hemoprotein reductase] + H2O + H(+). The enzyme catalyses all-trans-retinol + reduced [NADPH--hemoprotein reductase] + O2 = all-trans-retinal + oxidized [NADPH--hemoprotein reductase] + 2 H2O + H(+). The catalysed reaction is all-trans-retinal + reduced [NADPH--hemoprotein reductase] + O2 = all-trans-retinoate + oxidized [NADPH--hemoprotein reductase] + H2O + 2 H(+). It carries out the reaction (5Z,8Z,11Z,14Z)-eicosatetraenoate + reduced [NADPH--hemoprotein reductase] + O2 = (14R,15S)-epoxy-(5Z,8Z,11Z)-eicosatrienoate + oxidized [NADPH--hemoprotein reductase] + H2O + H(+). It catalyses the reaction (5Z,8Z,11Z,14Z)-eicosatetraenoate + reduced [NADPH--hemoprotein reductase] + O2 = (14S,15R)-epoxy-(5Z,8Z,11Z)-eicosatrienoate + oxidized [NADPH--hemoprotein reductase] + H2O + H(+). The enzyme catalyses (5Z,8Z,11Z,14Z,17Z)-eicosapentaenoate + reduced [NADPH--hemoprotein reductase] + O2 = (17R,18S)-epoxy-(5Z,8Z,11Z,14Z)-eicosatetraenoate + oxidized [NADPH--hemoprotein reductase] + H2O + H(+). The catalysed reaction is (4Z,7Z,10Z,13Z,16Z,19Z)-docosahexaenoate + reduced [NADPH--hemoprotein reductase] + O2 = (19R,20S)-epoxy-(4Z,7Z,10Z,13Z,16Z)-docosapentaenoate + oxidized [NADPH--hemoprotein reductase] + H2O + H(+). It carries out the reaction (5S)-hydroperoxy-(6E,8Z,11Z,14Z)-eicosatetraenoate = 5-oxo-(6E,8Z,11Z,14Z)-eicosatetraenoate + H2O. It catalyses the reaction (12S)-hydroperoxy-(5Z,8Z,10E,14Z)-eicosatetraenoate = 12-oxo-(5Z,8Z,10E,14Z)-eicosatetraenoate + H2O. The enzyme catalyses (15S)-hydroperoxy-(5Z,8Z,11Z,13E)-eicosatetraenoate = 15-oxo-(5Z,8Z,11Z,13E)-eicosatetraenoate + H2O. The catalysed reaction is (13S)-hydroperoxy-(9Z,11E)-octadecadienoate = 13-oxo-(9Z,11E)-octadecadienoate + H2O. It carries out the reaction (5Z,8Z,11Z,14Z)-eicosatetraenoate + reduced [NADPH--hemoprotein reductase] + O2 = 13-hydroxy-(5Z,8Z,11Z,14Z)-eicosatetraenoate + oxidized [NADPH--hemoprotein reductase] + H2O + H(+). It catalyses the reaction (5Z,8Z,11Z,14Z)-eicosatetraenoate + reduced [NADPH--hemoprotein reductase] + O2 = 19-hydroxy-(5Z,8Z,11Z,14Z)-eicosatetraenoate + oxidized [NADPH--hemoprotein reductase] + H2O + H(+). The enzyme catalyses (9Z,12Z)-octadecadienoate + reduced [NADPH--hemoprotein reductase] + O2 = 11-hydroxy-(9Z,12Z)-octadecadienoate + oxidized [NADPH--hemoprotein reductase] + H2O + H(+). It functions in the pathway cofactor metabolism; retinol metabolism. Its pathway is steroid metabolism; cholesterol metabolism. It participates in lipid metabolism; arachidonate metabolism. A cytochrome P450 monooxygenase involved in the metabolism of various endogenous substrates, including fatty acids, steroid hormones and vitamins. Mechanistically, uses molecular oxygen inserting one oxygen atom into a substrate, and reducing the second into a water molecule, with two electrons provided by NADPH via cytochrome P450 reductase (NADPH--hemoprotein reductase). Catalyzes the hydroxylation of carbon-hydrogen bonds. Exhibits high catalytic activity for the formation of hydroxyestrogens from estrone (E1) and 17beta-estradiol (E2), namely 2-hydroxy E1 and E2. Metabolizes cholesterol toward 25-hydroxycholesterol, a physiological regulator of cellular cholesterol homeostasis. May act as a major enzyme for all-trans retinoic acid biosynthesis in the liver. Catalyzes two successive oxidative transformation of all-trans retinol to all-trans retinal and then to the active form all-trans retinoic acid. Primarily catalyzes stereoselective epoxidation of the last double bond of polyunsaturated fatty acids (PUFA), displaying a strong preference for the (R,S) stereoisomer. Catalyzes bisallylic hydroxylation and omega-1 hydroxylation of PUFA. May also participate in eicosanoids metabolism by converting hydroperoxide species into oxo metabolites (lipoxygenase-like reaction, NADPH-independent). Plays a role in the oxidative metabolism of xenobiotics. Catalyzes the N-hydroxylation of heterocyclic amines and the O-deethylation of phenacetin. Metabolizes caffeine via N3-demethylation. In Oryctolagus cuniculus (Rabbit), this protein is Cytochrome P450 1A2 (CYP1A2).